Here is a 96-residue protein sequence, read N- to C-terminus: Large ribosomal subunit protein bL28 (96 aa).

Belongs to the bacterial ribosomal protein bL28 family.

This chain is Large ribosomal subunit protein bL28, found in Methylocella silvestris (strain DSM 15510 / CIP 108128 / LMG 27833 / NCIMB 13906 / BL2).